Here is a 1155-residue protein sequence, read N- to C-terminus: DNA-directed RNA polymerase subunit beta (1155 aa).

Belongs to the RNA polymerase beta chain family. The RNAP catalytic core consists of 2 alpha, 1 beta, 1 beta' and 1 omega subunit. When a sigma factor is associated with the core the holoenzyme is formed, which can initiate transcription.

The catalysed reaction is RNA(n) + a ribonucleoside 5'-triphosphate = RNA(n+1) + diphosphate. Functionally, DNA-dependent RNA polymerase catalyzes the transcription of DNA into RNA using the four ribonucleoside triphosphates as substrates. The protein is DNA-directed RNA polymerase subunit beta of Borreliella burgdorferi (strain ZS7) (Borrelia burgdorferi).